The following is a 185-amino-acid chain: Ribosome-recycling factor (185 aa).

This sequence belongs to the RRF family.

Its subcellular location is the cytoplasm. Functionally, responsible for the release of ribosomes from messenger RNA at the termination of protein biosynthesis. May increase the efficiency of translation by recycling ribosomes from one round of translation to another. In Shewanella sp. (strain W3-18-1), this protein is Ribosome-recycling factor.